Here is a 179-residue protein sequence, read N- to C-terminus: DELTA-actitoxin-Afr1a (179 aa).

Positions 1-29 (SADVAGAVIDGAGLGFDVLKTVLEALGNV) are N-terminal alpha-helix that contributes to the pore. Arg-31 contacts an N-(acyl)-sphingosylphosphocholine. N-acetyl-D-glucosamine 6-sulfate is bound by residues Tyr-51 and Arg-53. Residues Arg-53, Ser-54, Arg-79, Gly-85, Tyr-108, Tyr-113, Ser-114, Trp-116, Tyr-133, Tyr-137, Tyr-138, Arg-144, and Gly-168 each coordinate an N-(acyl)-sphingosylphosphocholine. Residues 105–120 (SVPYDYNWYSNWWNVR) form a trp-rich region, which is important for the binding to lipid membrane region. Residue Tyr-138 participates in N-acetyl-D-glucosamine 6-sulfate binding. A Cell attachment site, crucial for protein stability motif is present at residues 144 to 146 (RGD).

It belongs to the actinoporin family. Sea anemone subfamily. As to quaternary structure, octamer or nonamer in membranes. Monomer in the soluble state.

It localises to the secreted. The protein localises to the nematocyst. It is found in the target cell membrane. In terms of biological role, pore-forming toxin (PFT) that consists of a crown-shaped octamer or nonamer that forms cation-selective hydrophilic pores of about 1.5 nm (inside) and 13 nm (outside). It causes cardiac stimulation and cytolysis (EC(50)=1.6 nM on erythrocytes). Interestingly, the Phe-16 is crucial for hemolysis. Pore formation is a multi-step process that involves specific recognition of membrane sphingomyelin (but neither cholesterol nor phosphatidylcholine) using aromatic rich region and adjacent phosphocholine (POC) binding site, firm binding to the membrane (mainly driven by hydrophobic interactions) accompanied by the transfer of the N-terminal region to the lipid-water interface and finally pore formation after oligomerization of monomers. It is probable that a dimeric form is an assembly intermediate before the complete oligomerization. The formation of stable pores occurs only in vesicles composed of DOPC/SM (there is no oligomerization when the PFT is treated with vesicles of DOPC or SM alone). The transmembrane pore displays 8 lateral perforations, one at each subunit-subunit interface, partially occupied by the acyl-chain region of a bridging lipid. Each pore contains 24 lipid molecules, firmly bound to each subunit, that is, 3 lipids (L1, L2, L3, L4 and/or L5) are associated to each subunit. Lipid L1 bridges 2 subunits, whereas lipids L2 and L3 bind to sites at single subunit. The polypeptide is DELTA-actitoxin-Afr1a (Actinia fragacea (Strawberry anemone)).